Reading from the N-terminus, the 523-residue chain is Polyamine aminopropyltransferase (523 aa).

The next 7 helical transmembrane spans lie at 20–40, 51–71, 88–108, 116–136, 164–184, 186–206, and 215–235; these read VLLA…LALL, IVAT…GALL, AVLG…FAFL, LVLA…VPLL, LGAL…LGMI, GAAV…IFLL, and LVTA…LLVH. A spermidine synthase region spans residues 203 to 478; that stretch reads IFLLRHVVSG…APTPAVPSTA (276 aa). One can recognise a PABS domain in the interval 231–465; that stretch reads TLLVHSHDIE…GDWGFALARL (235 aa). Gln-261 provides a ligand contact to S-methyl-5'-thioadenosine. A spermidine-binding site is contributed by Asp-313. Residues Glu-333 and 365–366 contribute to the S-methyl-5'-thioadenosine site; that span reads DA. Asp-386 acts as the Proton acceptor in catalysis.

It belongs to the spermidine/spermine synthase family. Homodimer or homotetramer.

It is found in the cell membrane. The catalysed reaction is S-adenosyl 3-(methylsulfanyl)propylamine + putrescine = S-methyl-5'-thioadenosine + spermidine + H(+). It functions in the pathway amine and polyamine biosynthesis; spermidine biosynthesis; spermidine from putrescine: step 1/1. Its function is as follows. Catalyzes the irreversible transfer of a propylamine group from the amino donor S-adenosylmethioninamine (decarboxy-AdoMet) to putrescine (1,4-diaminobutane) to yield spermidine. The chain is Polyamine aminopropyltransferase from Mycobacterium bovis (strain ATCC BAA-935 / AF2122/97).